A 218-amino-acid chain; its full sequence is Serine/threonine-protein phosphatase 2 (218 aa).

4 residues coordinate Mn(2+): Asp-22, His-24, Asp-51, and Asn-77. His-78 (proton donor) is an active-site residue. His-187 provides a ligand contact to Mn(2+).

The protein belongs to the PPP phosphatase family. It depends on Mn(2+) as a cofactor.

The enzyme catalyses O-phospho-L-seryl-[protein] + H2O = L-seryl-[protein] + phosphate. The catalysed reaction is O-phospho-L-threonyl-[protein] + H2O = L-threonyl-[protein] + phosphate. In terms of biological role, has been shown, in vitro, to act on Ser, Thr and Tyr-phosphorylated substrates. In Escherichia coli (strain K12), this protein is Serine/threonine-protein phosphatase 2 (pphB).